Here is a 156-residue protein sequence, read N- to C-terminus: Small ribosomal subunit protein uS7 (156 aa).

The protein belongs to the universal ribosomal protein uS7 family. As to quaternary structure, part of the 30S ribosomal subunit. Contacts proteins S9 and S11.

One of the primary rRNA binding proteins, it binds directly to 16S rRNA where it nucleates assembly of the head domain of the 30S subunit. Is located at the subunit interface close to the decoding center, probably blocks exit of the E-site tRNA. This is Small ribosomal subunit protein uS7 from Mycoplasmopsis agalactiae (strain NCTC 10123 / CIP 59.7 / PG2) (Mycoplasma agalactiae).